The primary structure comprises 391 residues: Elongation factor Tu (391 aa).

One can recognise a tr-type G domain in the interval 10–201 (KPHVNIGTIG…EVDKYIPTPE (192 aa)). The G1 stretch occupies residues 19-26 (GHVDHGKT). Residue 19–26 (GHVDHGKT) participates in GTP binding. Mg(2+) is bound at residue Thr-26. Residues 55–59 (GITIS) are G2. The tract at residues 76 to 79 (DCPG) is G3. GTP-binding positions include 76-80 (DCPGH) and 131-134 (NKVD). Positions 131 to 134 (NKVD) are G4. The interval 169-171 (SAL) is G5.

This sequence belongs to the TRAFAC class translation factor GTPase superfamily. Classic translation factor GTPase family. EF-Tu/EF-1A subfamily. In terms of assembly, monomer.

The protein resides in the cytoplasm. The catalysed reaction is GTP + H2O = GDP + phosphate + H(+). In terms of biological role, GTP hydrolase that promotes the GTP-dependent binding of aminoacyl-tRNA to the A-site of ribosomes during protein biosynthesis. In Chelativorans sp. (strain BNC1), this protein is Elongation factor Tu.